Consider the following 181-residue polypeptide: ATP synthase subunit delta (181 aa).

This sequence belongs to the ATPase delta chain family. As to quaternary structure, F-type ATPases have 2 components, F(1) - the catalytic core - and F(0) - the membrane proton channel. F(1) has five subunits: alpha(3), beta(3), gamma(1), delta(1), epsilon(1). F(0) has three main subunits: a(1), b(2) and c(10-14). The alpha and beta chains form an alternating ring which encloses part of the gamma chain. F(1) is attached to F(0) by a central stalk formed by the gamma and epsilon chains, while a peripheral stalk is formed by the delta and b chains.

The protein localises to the cell membrane. In terms of biological role, f(1)F(0) ATP synthase produces ATP from ADP in the presence of a proton or sodium gradient. F-type ATPases consist of two structural domains, F(1) containing the extramembraneous catalytic core and F(0) containing the membrane proton channel, linked together by a central stalk and a peripheral stalk. During catalysis, ATP synthesis in the catalytic domain of F(1) is coupled via a rotary mechanism of the central stalk subunits to proton translocation. Functionally, this protein is part of the stalk that links CF(0) to CF(1). It either transmits conformational changes from CF(0) to CF(1) or is implicated in proton conduction. In Mycoplasma mycoides subsp. mycoides SC (strain CCUG 32753 / NCTC 10114 / PG1), this protein is ATP synthase subunit delta.